Here is a 61-residue protein sequence, read N- to C-terminus: MGKKIKITLVKSTIGRKPKHVAIAKQLGLGKTNSSVVHSDTPAIRGLVNEINYLLLVEESA.

The protein belongs to the universal ribosomal protein uL30 family. Part of the 50S ribosomal subunit.

The sequence is that of Large ribosomal subunit protein uL30 from Legionella pneumophila (strain Paris).